A 199-amino-acid chain; its full sequence is Recombination protein RecR (199 aa).

A C4-type zinc finger spans residues 57–72; the sequence is CAECRTFTEEEVCHIC. The Toprim domain maps to 81-176; sequence GQICVVESPA…EASRIAHGVP (96 aa).

Belongs to the RecR family.

Functionally, may play a role in DNA repair. It seems to be involved in an RecBC-independent recombinational process of DNA repair. It may act with RecF and RecO. The chain is Recombination protein RecR from Vibrio parahaemolyticus serotype O3:K6 (strain RIMD 2210633).